The chain runs to 168 residues: Peptide deformylase (168 aa).

Cys92 and His134 together coordinate Fe cation. The active site involves Glu135. A Fe cation-binding site is contributed by His138.

Belongs to the polypeptide deformylase family. Requires Fe(2+) as cofactor.

It catalyses the reaction N-terminal N-formyl-L-methionyl-[peptide] + H2O = N-terminal L-methionyl-[peptide] + formate. Removes the formyl group from the N-terminal Met of newly synthesized proteins. Requires at least a dipeptide for an efficient rate of reaction. N-terminal L-methionine is a prerequisite for activity but the enzyme has broad specificity at other positions. This chain is Peptide deformylase, found in Teredinibacter turnerae (strain ATCC 39867 / T7901).